The sequence spans 205 residues: Thiamine-phosphate synthase (205 aa).

4-amino-2-methyl-5-(diphosphooxymethyl)pyrimidine contacts are provided by residues 34 to 38 and N66; that span reads QLRCK. Residues D67 and D86 each contribute to the Mg(2+) site. S105 is a 4-amino-2-methyl-5-(diphosphooxymethyl)pyrimidine binding site. 131 to 133 lines the 2-[(2R,5Z)-2-carboxy-4-methylthiazol-5(2H)-ylidene]ethyl phosphate pocket; sequence TTT. K134 is a binding site for 4-amino-2-methyl-5-(diphosphooxymethyl)pyrimidine. G163 serves as a coordination point for 2-[(2R,5Z)-2-carboxy-4-methylthiazol-5(2H)-ylidene]ethyl phosphate.

The protein belongs to the thiamine-phosphate synthase family. Mg(2+) is required as a cofactor.

The enzyme catalyses 2-[(2R,5Z)-2-carboxy-4-methylthiazol-5(2H)-ylidene]ethyl phosphate + 4-amino-2-methyl-5-(diphosphooxymethyl)pyrimidine + 2 H(+) = thiamine phosphate + CO2 + diphosphate. It carries out the reaction 2-(2-carboxy-4-methylthiazol-5-yl)ethyl phosphate + 4-amino-2-methyl-5-(diphosphooxymethyl)pyrimidine + 2 H(+) = thiamine phosphate + CO2 + diphosphate. The catalysed reaction is 4-methyl-5-(2-phosphooxyethyl)-thiazole + 4-amino-2-methyl-5-(diphosphooxymethyl)pyrimidine + H(+) = thiamine phosphate + diphosphate. Its pathway is cofactor biosynthesis; thiamine diphosphate biosynthesis; thiamine phosphate from 4-amino-2-methyl-5-diphosphomethylpyrimidine and 4-methyl-5-(2-phosphoethyl)-thiazole: step 1/1. In terms of biological role, condenses 4-methyl-5-(beta-hydroxyethyl)thiazole monophosphate (THZ-P) and 2-methyl-4-amino-5-hydroxymethyl pyrimidine pyrophosphate (HMP-PP) to form thiamine monophosphate (TMP). In Neisseria meningitidis serogroup A / serotype 4A (strain DSM 15465 / Z2491), this protein is Thiamine-phosphate synthase.